The following is a 121-amino-acid chain: Phosphoribosyl-ATP pyrophosphatase (121 aa).

This sequence belongs to the PRA-PH family.

It is found in the cytoplasm. The enzyme catalyses 1-(5-phospho-beta-D-ribosyl)-ATP + H2O = 1-(5-phospho-beta-D-ribosyl)-5'-AMP + diphosphate + H(+). The protein operates within amino-acid biosynthesis; L-histidine biosynthesis; L-histidine from 5-phospho-alpha-D-ribose 1-diphosphate: step 2/9. The sequence is that of Phosphoribosyl-ATP pyrophosphatase from Burkholderia vietnamiensis (strain G4 / LMG 22486) (Burkholderia cepacia (strain R1808)).